The primary structure comprises 415 residues: D-galactonate dehydratase family member RspA (415 aa).

Substrate contacts are provided by asparagine 48 and histidine 133. Residue tyrosine 170 is the Proton donor/acceptor of the active site. Aspartate 223 provides a ligand contact to Mg(2+). Histidine 225 acts as the Proton donor/acceptor in catalysis. Glutamate 249, aspartate 250, and glutamate 275 together coordinate Mg(2+). Substrate is bound by residues glutamate 275, arginine 296, histidine 325, aspartate 329, and glutamate 352.

It belongs to the mandelate racemase/muconate lactonizing enzyme family. GalD subfamily. Mg(2+) serves as cofactor.

It catalyses the reaction D-mannonate = 2-dehydro-3-deoxy-D-gluconate + H2O. Functionally, has low D-mannonate dehydratase activity (in vitro), suggesting that this is not a physiological substrate and that it has no significant role in D-mannonate degradation in vivo. Has no detectable activity with a panel of 70 other acid sugars (in vitro). This is D-galactonate dehydratase family member RspA (rspA) from Escherichia coli O6:H1 (strain CFT073 / ATCC 700928 / UPEC).